The chain runs to 109 residues: Membrane-bound lysozyme inhibitor of C-type lysozyme (109 aa).

Positions Met1–Gly17 are cleaved as a signal peptide. Cys18 is lipidated: N-palmitoyl cysteine. Cys18 carries the S-diacylglycerol cysteine lipid modification. Cys37 and Cys102 form a disulfide bridge.

The protein belongs to the MliC family. Type 1 subfamily. Monomer.

The protein localises to the cell outer membrane. Its function is as follows. Specifically inhibits C-type lysozymes. This chain is Membrane-bound lysozyme inhibitor of C-type lysozyme, found in Escherichia coli (strain K12).